A 109-amino-acid polypeptide reads, in one-letter code: T cell receptor alpha variable 26-2 (109 aa).

A signal peptide spans 1 to 19; it reads MKLVTSITVLLSLGIMGDA. The Ig-like domain maps to 20–109; that stretch reads KTTQPNSMES…AAVYYCILRD (90 aa). A disulfide bridge connects residues Cys-39 and Cys-105. An N-linked (GlcNAc...) asparagine glycan is attached at Asn-40.

In terms of assembly, alpha-beta TR is a heterodimer composed of an alpha and beta chain; disulfide-linked. The alpha-beta TR is associated with the transmembrane signaling CD3 coreceptor proteins to form the TR-CD3 (TcR or TCR). The assembly of alpha-beta TR heterodimers with CD3 occurs in the endoplasmic reticulum where a single alpha-beta TR heterodimer associates with one CD3D-CD3E heterodimer, one CD3G-CD3E heterodimer and one CD247 homodimer forming a stable octameric structure. CD3D-CD3E and CD3G-CD3E heterodimers preferentially associate with TR alpha and TR beta chains, respectively. The association of the CD247 homodimer is the last step of TcR assembly in the endoplasmic reticulum and is required for transport to the cell surface.

It localises to the cell membrane. Functionally, v region of the variable domain of T cell receptor (TR) alpha chain that participates in the antigen recognition. Alpha-beta T cell receptors are antigen specific receptors which are essential to the immune response and are present on the cell surface of T lymphocytes. Recognize peptide-major histocompatibility (MH) (pMH) complexes that are displayed by antigen presenting cells (APC), a prerequisite for efficient T cell adaptive immunity against pathogens. Binding of alpha-beta TR to pMH complex initiates TR-CD3 clustering on the cell surface and intracellular activation of LCK that phosphorylates the ITAM motifs of CD3G, CD3D, CD3E and CD247 enabling the recruitment of ZAP70. In turn ZAP70 phosphorylates LAT, which recruits numerous signaling molecules to form the LAT signalosome. The LAT signalosome propagates signal branching to three major signaling pathways, the calcium, the mitogen-activated protein kinase (MAPK) kinase and the nuclear factor NF-kappa-B (NF-kB) pathways, leading to the mobilization of transcription factors that are critical for gene expression and essential for T cell growth and differentiation. The T cell repertoire is generated in the thymus, by V-(D)-J rearrangement. This repertoire is then shaped by intrathymic selection events to generate a peripheral T cell pool of self-MH restricted, non-autoaggressive T cells. Post-thymic interaction of alpha-beta TR with the pMH complexes shapes TR structural and functional avidity. This is T cell receptor alpha variable 26-2 from Homo sapiens (Human).